A 246-amino-acid polypeptide reads, in one-letter code: Transcriptional regulatory protein LytR (246 aa).

A Response regulatory domain is found at 2 to 116; sequence KALIIDDEPL…RIEQAVNKVR (115 aa). Asp-53 is subject to 4-aspartylphosphate. In terms of domain architecture, HTH LytTR-type spans 141–245; it reads LPVEIDDKIH…MKDFKASIGL (105 aa).

As to quaternary structure, homodimer; when phosphorylated. Post-translationally, phosphorylated and dephosphorylated by LytS.

The protein resides in the cytoplasm. In terms of biological role, member of the two-component regulatory system LytR/LytS that regulates genes involved in autolysis, programmed cell death, biofilm formation and cell wall metabolism. Also participates in sensing and responding to host defense cationic antimicrobial peptides (HDPs). Upon phosphorylation by LytS, functions as a transcription regulator by direct binding to promoter regions of target genes including lrgA and lrgB, to positively regulate their expression. The sequence is that of Transcriptional regulatory protein LytR (lytR) from Staphylococcus aureus (strain MW2).